A 213-amino-acid chain; its full sequence is Uridine kinase (213 aa).

Residue G15–S22 coordinates ATP.

Belongs to the uridine kinase family.

It is found in the cytoplasm. The enzyme catalyses uridine + ATP = UMP + ADP + H(+). The catalysed reaction is cytidine + ATP = CMP + ADP + H(+). Its pathway is pyrimidine metabolism; CTP biosynthesis via salvage pathway; CTP from cytidine: step 1/3. It functions in the pathway pyrimidine metabolism; UMP biosynthesis via salvage pathway; UMP from uridine: step 1/1. This is Uridine kinase from Escherichia fergusonii (strain ATCC 35469 / DSM 13698 / CCUG 18766 / IAM 14443 / JCM 21226 / LMG 7866 / NBRC 102419 / NCTC 12128 / CDC 0568-73).